The primary structure comprises 528 residues: Major facilitator superfamily multidrug transporter mdr3 (528 aa).

Residues 1 to 37 (MLAMAASAEETNRQSNAGRRSVISPSEAPPEAEQSDV) form a disordered region. A run of 7 helical transmembrane segments spans residues 50–70 (FILI…YILI), 91–111 (WHVG…GKLG), 119–139 (ILVL…CSAF), 149–169 (ARAL…AIAG), 180–200 (MIFS…GVVG), 211–231 (WVMW…LWVI), and 241–261 (AATL…LLLL). N262 is a glycosylation site (N-linked (GlcNAc...) asparagine). 5 consecutive transmembrane segments (helical) span residues 272-292 (GWST…LGLF), 340-360 (VITS…GCIL), 375-395 (FWSF…STTI), 410-430 (SLVN…AGTV), and 448-468 (ALWS…VFAV).

Belongs to the major facilitator superfamily.

Its subcellular location is the cell membrane. Its function is as follows. Major facilitator superfamily transporter that confers resistance to azoles such as itraconazole. This Aspergillus fumigatus (strain ATCC MYA-4609 / CBS 101355 / FGSC A1100 / Af293) (Neosartorya fumigata) protein is Major facilitator superfamily multidrug transporter mdr3.